The sequence spans 159 residues: Transcription elongation factor GreA (159 aa).

Positions 43–75 form a coiled coil; that stretch reads LSENAEYDAAREEQSQLEAKIGEIENKLASATI.

It belongs to the GreA/GreB family.

Necessary for efficient RNA polymerase transcription elongation past template-encoded arresting sites. The arresting sites in DNA have the property of trapping a certain fraction of elongating RNA polymerases that pass through, resulting in locked ternary complexes. Cleavage of the nascent transcript by cleavage factors such as GreA or GreB allows the resumption of elongation from the new 3'terminus. GreA releases sequences of 2 to 3 nucleotides. The sequence is that of Transcription elongation factor GreA from Chlorobaculum tepidum (strain ATCC 49652 / DSM 12025 / NBRC 103806 / TLS) (Chlorobium tepidum).